A 339-amino-acid chain; its full sequence is MIDKIKQHIEEAKAFNEKNKESLEQFRIKYLGSKGLLKELFNEFKNIPNDQKKDFGQVINTLKAVAEEKVKQIQEELESKEESKGVFGDLTRAAEPVIIGSRHPISIVKNQIIDIFANIGFNVSEGPEIEDDWHNFTALNLPEYHPARDMQDTFFIQTNPDVLLRTHTSSVQVRYMENHKPPIRTISPGRVFRNEAISSRSHCIFHQVEGLYIDKDVSFADLKQTLLYFTKEMFGKSKIRLRPSYFPFTEPSAEIDIYWGLKTETDYRITKGTGWLEIGGCGMVDPNVLKNCDINPDEYNGFAFGMGVERIAMLLYQIGDIRMFYENDVRFLEQFKANI.

Glutamate 250 is a Mg(2+) binding site.

The protein belongs to the class-II aminoacyl-tRNA synthetase family. Phe-tRNA synthetase alpha subunit type 1 subfamily. As to quaternary structure, tetramer of two alpha and two beta subunits. Mg(2+) serves as cofactor.

It localises to the cytoplasm. It carries out the reaction tRNA(Phe) + L-phenylalanine + ATP = L-phenylalanyl-tRNA(Phe) + AMP + diphosphate + H(+). In Flavobacterium johnsoniae (strain ATCC 17061 / DSM 2064 / JCM 8514 / BCRC 14874 / CCUG 350202 / NBRC 14942 / NCIMB 11054 / UW101) (Cytophaga johnsonae), this protein is Phenylalanine--tRNA ligase alpha subunit.